The sequence spans 103 residues: Large ribosomal subunit protein bL21 (103 aa).

Belongs to the bacterial ribosomal protein bL21 family. Part of the 50S ribosomal subunit. Contacts protein L20.

Its function is as follows. This protein binds to 23S rRNA in the presence of protein L20. In Albidiferax ferrireducens (strain ATCC BAA-621 / DSM 15236 / T118) (Rhodoferax ferrireducens), this protein is Large ribosomal subunit protein bL21.